The sequence spans 48 residues: MVKRKANHVINGMNDAKSQGKGAGYIENDQLVLTEEERQNNKKRKTNQ.

The interval 1-23 (MVKRKANHVINGMNDAKSQGKGA) is disordered.

This sequence belongs to the SspO family.

The protein resides in the spore core. In Bacillus velezensis (strain DSM 23117 / BGSC 10A6 / LMG 26770 / FZB42) (Bacillus amyloliquefaciens subsp. plantarum), this protein is Small, acid-soluble spore protein O.